A 692-amino-acid chain; its full sequence is Polyribonucleotide nucleotidyltransferase (692 aa).

Positions 484 and 490 each coordinate Mg(2+). Residues 551–610 (PRIITIQINPDRIRDVIGPGGKVIRALTEETGATIDIQDNGTVTIASVDGEAGAAAKRRI) enclose the KH domain. Residues 620–688 (DTIYDGKVAK…RQGKIKLSMK (69 aa)) form the S1 motif domain.

It belongs to the polyribonucleotide nucleotidyltransferase family. In terms of assembly, component of the RNA degradosome, which is a multiprotein complex involved in RNA processing and mRNA degradation. Mg(2+) serves as cofactor.

It is found in the cytoplasm. It catalyses the reaction RNA(n+1) + phosphate = RNA(n) + a ribonucleoside 5'-diphosphate. Involved in mRNA degradation. Catalyzes the phosphorolysis of single-stranded polyribonucleotides processively in the 3'- to 5'-direction. The sequence is that of Polyribonucleotide nucleotidyltransferase from Acidithiobacillus ferrooxidans (strain ATCC 53993 / BNL-5-31) (Leptospirillum ferrooxidans (ATCC 53993)).